A 397-amino-acid chain; its full sequence is Phosphoglycerate kinase (397 aa).

Residues 21-23 (DFN), R37, 60-63 (HLGR), R119, and R152 contribute to the substrate site. ATP-binding positions include K203, G294, E325, and 354–357 (GGDS).

This sequence belongs to the phosphoglycerate kinase family. As to quaternary structure, monomer.

The protein resides in the cytoplasm. It carries out the reaction (2R)-3-phosphoglycerate + ATP = (2R)-3-phospho-glyceroyl phosphate + ADP. The protein operates within carbohydrate degradation; glycolysis; pyruvate from D-glyceraldehyde 3-phosphate: step 2/5. The sequence is that of Phosphoglycerate kinase from Pelodictyon phaeoclathratiforme (strain DSM 5477 / BU-1).